A 420-amino-acid polypeptide reads, in one-letter code: F-box protein At5g07610 (420 aa).

The tract at residues 1–25 is disordered; it reads MSSCSRTRTKAPRSARSRRNGGFSS. Residues 7–19 are compositionally biased toward basic residues; the sequence is TRTKAPRSARSRR. The F-box domain occupies 27–77; the sequence is SATIVADIDDVLIQILSFLPIKTLLRFKRVSKRWLSLITNPVFSNRVIKSN.

The sequence is that of F-box protein At5g07610 from Arabidopsis thaliana (Mouse-ear cress).